Reading from the N-terminus, the 347-residue chain is Transcription factor JunD (347 aa).

A disordered region spans residues 1–43; that stretch reads METPFYGDEALSGLGGGASGSGGSFASPGRLFPGAPPTAAAGS. Gly residues predominate over residues 13–23; it reads GLGGGASGSGG. A Menin-binding motif (MBM) motif is present at residues 27 to 39; sequence SPGRLFPGAPPTA. Residues 46-55 carry the MAP kinase docking motif; essential for its phosphorylation motif; sequence KKDALTLSLS. Residues 62–86 form a disordered region; sequence LKPAAAPPPTPLRADGAPSAAPPDG. The span at 73–86 shows a compositional bias: low complexity; that stretch reads LRADGAPSAAPPDG. Position 90 is a phosphoserine (Ser-90). Phosphoserine; by MAPK8 is present on Ser-100. Thr-117 carries the phosphothreonine modification. Positions 244–264 are disordered; it reads QTVPDVPSFGESPPLSPIDMD. Phosphoserine occurs at positions 251, 255, and 259. Residues 268–295 are basic motif; that stretch reads RIKAERKRLRNRIAASKCRKRKLERISR. A bZIP domain is found at 268–331; it reads RIKAERKRLR…AQLKQKVLSH (64 aa). The interval 296–324 is leucine-zipper; the sequence is LEEKVKTLKSQNTELASTASLLREQVAQL.

Belongs to the bZIP family. Jun subfamily. In terms of assembly, heterodimer; binds DNA as a heterodimer. Component of an AP-1 transcription factor complex composed of JUN-FOS heterodimers. As part of the AP-1 transcription factor complex, forms heterodimers with FOS proteins, thereby binding to the AP-1 consensus sequence and stimulating transcription. Forms heterodimers with FOSB; thereby binding to the AP-1 consensus sequence. Interacts (via MBM motif) with MEN1; this interaction represses transcriptional activation. Interacts with MAPK10; this interaction is inhibited in the presence of MEN1. In terms of processing, phosphorylated by MAP kinases MAPK8 and MAPK10; phosphorylation is inhibited in the presence of MEN1.

The protein resides in the nucleus. Functionally, transcription factor binding AP-1 sites. Heterodimerizes with proteins of the FOS family to form an AP-1 transcription factor complex, thereby enhancing their DNA binding activity to an AP-1 consensus sequence 3'-TGA[GC]TCA-5' and enhancing their transcriptional activity. This chain is Transcription factor JunD (JUND), found in Homo sapiens (Human).